We begin with the raw amino-acid sequence, 155 residues long: Small ribosomal subunit protein uS7 (155 aa).

This sequence belongs to the universal ribosomal protein uS7 family. As to quaternary structure, part of the 30S ribosomal subunit. Contacts proteins S9 and S11.

Its function is as follows. One of the primary rRNA binding proteins, it binds directly to 16S rRNA where it nucleates assembly of the head domain of the 30S subunit. Is located at the subunit interface close to the decoding center, probably blocks exit of the E-site tRNA. In Xylella fastidiosa (strain M12), this protein is Small ribosomal subunit protein uS7.